A 491-amino-acid polypeptide reads, in one-letter code: MSLIEGLLQTSSTVTLLGTVLFLLVLYLRSSGSSSEGQGKEPPGPRPLPLLGNMLQLDLKKPYCTLCELSKKYGSIFTFHFGPKKVVVLAGYKTVKQALVNQAEDFGDRDITPVFYDFNQGHGILFANGDSWKEMRRFALTNLRDFGMGKKGSEEKILEEIPYLIEVFEKHEGKAFDTTQSVLYAVSNIISAIVYGSRFEYTDPLFTGMADRAKESIHLTGSASIQMYNMFPWLGPWINNLTRLKKNIADMKMEVTELVRGLKETLNPHMCRGFVDSFLVRKQTLEESGHMDSFYHDDNLVFSVGNLFSAGTDTTGTTLRWGLLLMTKYPHIQDQVQEEISGVIGSRQTLVEDRKNLPYTDAVIHETQRLANIAPMSIPHTTSRDVTFQGYFIKKDDSEWESPHTLTPSHFLDEKGGFVKRDAFMAFSAGRRVCLGEGLARMELFLFFTSLLQHFRFSPPPGVTEDDLDLTPSVEFTHNPSPHQLCAVSRV.

Cys-434 contributes to the heme binding site.

Belongs to the cytochrome P450 family. Heme is required as a cofactor.

The protein localises to the endoplasmic reticulum membrane. It localises to the microsome membrane. The catalysed reaction is an organic molecule + reduced [NADPH--hemoprotein reductase] + O2 = an alcohol + oxidized [NADPH--hemoprotein reductase] + H2O + H(+). This Oncorhynchus mykiss (Rainbow trout) protein is Cytochrome P450 2K3 (cyp2k3).